Consider the following 58-residue polypeptide: Small ribosomal subunit protein bS21 (58 aa).

The tract at residues 30 to 58 (SEVRKREHYEKPSVKRKKKSEAARKRKFK) is disordered. The span at 31 to 42 (EVRKREHYEKPS) shows a compositional bias: basic and acidic residues. The span at 43-58 (VKRKKKSEAARKRKFK) shows a compositional bias: basic residues.

This sequence belongs to the bacterial ribosomal protein bS21 family.

The chain is Small ribosomal subunit protein bS21 from Clostridium perfringens (strain ATCC 13124 / DSM 756 / JCM 1290 / NCIMB 6125 / NCTC 8237 / Type A).